The sequence spans 1357 residues: DNA-directed RNA polymerase subunit beta (1357 aa).

The protein belongs to the RNA polymerase beta chain family. In terms of assembly, the RNAP catalytic core consists of 2 alpha, 1 beta, 1 beta' and 1 omega subunit. When a sigma factor is associated with the core the holoenzyme is formed, which can initiate transcription.

The catalysed reaction is RNA(n) + a ribonucleoside 5'-triphosphate = RNA(n+1) + diphosphate. DNA-dependent RNA polymerase catalyzes the transcription of DNA into RNA using the four ribonucleoside triphosphates as substrates. The polypeptide is DNA-directed RNA polymerase subunit beta (Pseudomonas savastanoi pv. phaseolicola (strain 1448A / Race 6) (Pseudomonas syringae pv. phaseolicola (strain 1448A / Race 6))).